A 400-amino-acid polypeptide reads, in one-letter code: S-adenosylmethionine decarboxylase proenzyme (400 aa).

Catalysis depends on residues E18 and E21. The active-site Schiff-base intermediate with substrate; via pyruvic acid is the S78. S78 is subject to Pyruvic acid (Ser); by autocatalysis. C92 serves as the catalytic Proton donor; for catalytic activity. Active-site proton acceptor; for processing activity residues include S243 and H256.

It belongs to the eukaryotic AdoMetDC family. Pyruvate is required as a cofactor. Is synthesized initially as an inactive proenzyme. Formation of the active enzyme involves a self-maturation process in which the active site pyruvoyl group is generated from an internal serine residue via an autocatalytic post-translational modification. Two non-identical subunits are generated from the proenzyme in this reaction, and the pyruvate is formed at the N-terminus of the alpha chain, which is derived from the carboxyl end of the proenzyme. The post-translation cleavage follows an unusual pathway, termed non-hydrolytic serinolysis, in which the side chain hydroxyl group of the serine supplies its oxygen atom to form the C-terminus of the beta chain, while the remainder of the serine residue undergoes an oxidative deamination to produce ammonia and the pyruvoyl group blocking the N-terminus of the alpha chain.

It catalyses the reaction S-adenosyl-L-methionine + H(+) = S-adenosyl 3-(methylsulfanyl)propylamine + CO2. It functions in the pathway amine and polyamine biosynthesis; S-adenosylmethioninamine biosynthesis; S-adenosylmethioninamine from S-adenosyl-L-methionine: step 1/1. This chain is S-adenosylmethionine decarboxylase proenzyme (SAMDC), found in Zea mays (Maize).